A 130-amino-acid chain; its full sequence is Phosphoribosyl-AMP cyclohydrolase (130 aa).

Asp-74 lines the Mg(2+) pocket. Cys-75 is a binding site for Zn(2+). Asp-76 and Asp-78 together coordinate Mg(2+). Zn(2+) contacts are provided by Cys-91 and Cys-98.

This sequence belongs to the PRA-CH family. As to quaternary structure, homodimer. Mg(2+) is required as a cofactor. Zn(2+) serves as cofactor.

The protein localises to the cytoplasm. It catalyses the reaction 1-(5-phospho-beta-D-ribosyl)-5'-AMP + H2O = 1-(5-phospho-beta-D-ribosyl)-5-[(5-phospho-beta-D-ribosylamino)methylideneamino]imidazole-4-carboxamide. It functions in the pathway amino-acid biosynthesis; L-histidine biosynthesis; L-histidine from 5-phospho-alpha-D-ribose 1-diphosphate: step 3/9. Its function is as follows. Catalyzes the hydrolysis of the adenine ring of phosphoribosyl-AMP. The protein is Phosphoribosyl-AMP cyclohydrolase of Bradyrhizobium sp. (strain ORS 278).